Reading from the N-terminus, the 476-residue chain is CBL-interacting protein kinase 30 (476 aa).

A Protein kinase domain is found at 17–272 (YKLGRLLGRG…ISKIMDRPWF (256 aa)). Residues 23–31 (LGRGTFAKV) and Lys-46 contribute to the ATP site. Asp-140 acts as the Proton acceptor in catalysis. The segment at 158 to 187 (DFGLSALDGGLRGDGLLHTTCGTPAYVAPE) is activation loop. The tract at residues 296–315 (KEASQQHDDEEDDGFAREKK) is disordered. Residues 299 to 353 (SQQHDDEEDDGFAREKKKRSNVIMSSPVIDVRPSSMNAFDIISRSRGLDLSKMFD) enclose the NAF domain. A PPI region spans residues 358–387 (RSEARFSTRETTTAIVSKLEEIAEAGRFSF).

Belongs to the protein kinase superfamily. CAMK Ser/Thr protein kinase family. SNF1 subfamily. It depends on Mn(2+) as a cofactor.

The enzyme catalyses L-seryl-[protein] + ATP = O-phospho-L-seryl-[protein] + ADP + H(+). The catalysed reaction is L-threonyl-[protein] + ATP = O-phospho-L-threonyl-[protein] + ADP + H(+). CIPK serine-threonine protein kinases interact with CBL proteins. Binding of a CBL protein to the regulatory NAF domain of CIPK protein lead to the activation of the kinase in a calcium-dependent manner. This is CBL-interacting protein kinase 30 (CIPK30) from Oryza sativa subsp. japonica (Rice).